Here is a 132-residue protein sequence, read N- to C-terminus: Small ribosomal subunit protein uS8c (132 aa).

The protein belongs to the universal ribosomal protein uS8 family. In terms of assembly, part of the 30S ribosomal subunit.

The protein localises to the plastid. The protein resides in the chloroplast. Functionally, one of the primary rRNA binding proteins, it binds directly to 16S rRNA central domain where it helps coordinate assembly of the platform of the 30S subunit. In Nandina domestica (Heavenly bamboo), this protein is Small ribosomal subunit protein uS8c (rps8).